The following is a 433-amino-acid chain: MSEKKPHLNLVVIGHIDHGKSTLMGRLLYEIGAVDPRLIQQYEEEAKKMGRETWKYAWVLDKLKEEREKGITIDLGFYKFETKKYFFTLIDAPGHRDFVKNMITGASQADVALLVVSAKEGEFEAGISPAGQTREHVFLAKTMGVDQLVVAINKMDTVNYSKERYEEIKNQLIRLLRMVGYKVDEIPFIPTSAWEGVNVSKRTPEKTPWYDGPCLYEAFDFFKEPPRPIDKPLRIPIQDVYSIKGVGTVPVGRVETGVLKVGDKIIINPPKAVGEVKSIETHHTPLQEAIPGDNIGFNVKGVEKSQLRRGDVAGHTTNPPTVAEEFTGRIFVLYHPTAIAAGYTPVLHIHTATVPVTFEELLQKLDPRTGSVAEEKPQYIKQGDSAIVRFKPRKPVVVEKYSEFPPLGRFAIRDSGRTIAAGVVIDVKKAEGY.

Positions 5 to 227 constitute a tr-type G domain; the sequence is KPHLNLVVIG…AFDFFKEPPR (223 aa). The segment at 14 to 21 is G1; that stretch reads GHIDHGKS. Residue 14 to 21 participates in GTP binding; it reads GHIDHGKS. S21 contacts Mg(2+). The tract at residues 70–74 is G2; the sequence is GITID. Residues 91–94 are G3; that stretch reads DAPG. GTP is bound by residues 91–95 and 153–156; these read DAPGH and NKMD. Residues 153-156 are G4; sequence NKMD. Residues 192 to 194 are G5; that stretch reads SAW.

Belongs to the TRAFAC class translation factor GTPase superfamily. Classic translation factor GTPase family. EF-Tu/EF-1A subfamily.

The protein resides in the cytoplasm. It carries out the reaction GTP + H2O = GDP + phosphate + H(+). In terms of biological role, GTP hydrolase that promotes the GTP-dependent binding of aminoacyl-tRNA to the A-site of ribosomes during protein biosynthesis. This chain is Elongation factor 1-alpha, found in Thermofilum pendens (strain DSM 2475 / Hrk 5).